The sequence spans 187 residues: Rusticyanin (187 aa).

A signal peptide spans 1-32; the sequence is MYTQNTMKKNWYVTVGAAAALAATVGMGTAMA. The Plastocyanin-like domain maps to 85 to 187; sequence SFEVHDKKNP…TGMFGKIIVK (103 aa). Cu cation contacts are provided by His117, Cys170, His175, and Met180.

Monomer. The cofactor is Cu cation.

Its subcellular location is the periplasm. In terms of biological role, electron carrier from cytochrome c552 to the A-type oxidase. The chain is Rusticyanin (rus) from Acidithiobacillus ferridurans.